Consider the following 458-residue polypeptide: Flap endonuclease 1 (458 aa).

The interval Met1–Arg105 is N-domain. Asp34 is a Mg(2+) binding site. DNA-binding residues include Arg47 and Arg71. Mg(2+) is bound by residues Asp87, Glu159, Glu161, Asp180, and Asp182. An I-domain region spans residues Asp123–Phe254. Glu159 contacts DNA. The DNA site is built by Gly232 and Asp234. Asp234 is a binding site for Mg(2+). Disordered stretches follow at residues Ala268–Glu347 and Gly416–Lys458. Acidic residues-rich tracts occupy residues Ala275 to Glu285 and Glu293 to Glu309. Residues Ala310 to Lys329 are compositionally biased toward basic and acidic residues. Residues Gln410 to Phe418 are interaction with PCNA. Over residues Arg442 to Gly452 the composition is skewed to basic and acidic residues.

It belongs to the XPG/RAD2 endonuclease family. FEN1 subfamily. In terms of assembly, interacts with PCNA. Three molecules of FEN1 bind to one PCNA trimer with each molecule binding to one PCNA monomer. PCNA stimulates the nuclease activity without altering cleavage specificity. Requires Mg(2+) as cofactor. Post-translationally, phosphorylated. Phosphorylation upon DNA damage induces relocalization to the nuclear plasma.

The protein localises to the nucleus. It localises to the nucleolus. It is found in the nucleoplasm. The protein resides in the mitochondrion. Functionally, structure-specific nuclease with 5'-flap endonuclease and 5'-3' exonuclease activities involved in DNA replication and repair. During DNA replication, cleaves the 5'-overhanging flap structure that is generated by displacement synthesis when DNA polymerase encounters the 5'-end of a downstream Okazaki fragment. It enters the flap from the 5'-end and then tracks to cleave the flap base, leaving a nick for ligation. Also involved in the long patch base excision repair (LP-BER) pathway, by cleaving within the apurinic/apyrimidinic (AP) site-terminated flap. Acts as a genome stabilization factor that prevents flaps from equilibrating into structures that lead to duplications and deletions. Also possesses 5'-3' exonuclease activity on nicked or gapped double-stranded DNA, and exhibits RNase H activity. Also involved in replication and repair of rDNA and in repairing mitochondrial DNA. This chain is Flap endonuclease 1, found in Coprinopsis cinerea (strain Okayama-7 / 130 / ATCC MYA-4618 / FGSC 9003) (Inky cap fungus).